The primary structure comprises 531 residues: Endoglucanase 7 (531 aa).

The signal sequence occupies residues 1–27; it reads MRGRALVLVAALLLQLLLLAAAGGAGA. D89 acts as the Nucleophile in catalysis. Catalysis depends on residues H430, D482, and E491.

The protein belongs to the glycosyl hydrolase 9 (cellulase E) family. In terms of tissue distribution, ubiquitous.

Its subcellular location is the secreted. The enzyme catalyses Endohydrolysis of (1-&gt;4)-beta-D-glucosidic linkages in cellulose, lichenin and cereal beta-D-glucans.. The polypeptide is Endoglucanase 7 (GLU10) (Oryza sativa subsp. japonica (Rice)).